We begin with the raw amino-acid sequence, 894 residues long: Translation initiation factor IF-2 (894 aa).

The interval 25-304 is disordered; the sequence is ADAGMNKASS…KPTSMQHGFD (280 aa). Basic and acidic residues-rich tracts occupy residues 33-44, 52-62, 101-174, 184-239, and 247-263; these read SSDHVSDEEKQK, EHGDKSGESEP, STIE…KEMN, AKKE…ENSD, and YARE…EGGA. A compositionally biased stretch (basic residues) spans 283–293; that stretch reads RGGKGRNKGKL. The 170-residue stretch at 393–562 folds into the tr-type G domain; the sequence is PRAPVVTIMG…LLQSEVLELT (170 aa). The segment at 402–409 is G1; it reads GHVDHGKT. GTP is bound at residue 402 to 409; sequence GHVDHGKT. Residues 427-431 form a G2 region; it reads GITQH. Residues 448–451 are G3; that stretch reads DTPG. GTP is bound by residues 448-452 and 502-505; these read DTPGH and NKID. A G4 region spans residues 502–505; that stretch reads NKID. The segment at 538 to 540 is G5; that stretch reads SAK.

This sequence belongs to the TRAFAC class translation factor GTPase superfamily. Classic translation factor GTPase family. IF-2 subfamily.

It is found in the cytoplasm. In terms of biological role, one of the essential components for the initiation of protein synthesis. Protects formylmethionyl-tRNA from spontaneous hydrolysis and promotes its binding to the 30S ribosomal subunits. Also involved in the hydrolysis of GTP during the formation of the 70S ribosomal complex. This Vibrio campbellii (strain ATCC BAA-1116) protein is Translation initiation factor IF-2.